The following is a 403-amino-acid chain: S-adenosylmethionine synthase (403 aa).

Histidine 14 provides a ligand contact to ATP. Aspartate 16 serves as a coordination point for Mg(2+). Glutamate 42 provides a ligand contact to K(+). L-methionine-binding residues include glutamate 55 and glutamine 99. The segment at 99–109 is flexible loop; the sequence is QSPEIAEGVDH. Residues 180–182, 250–251, aspartate 259, 265–266, alanine 282, and lysine 286 each bind ATP; these read DAK, RF, and RK. Aspartate 259 is an L-methionine binding site. L-methionine is bound at residue lysine 290.

This sequence belongs to the AdoMet synthase family. As to quaternary structure, homotetramer; dimer of dimers. Mg(2+) serves as cofactor. It depends on K(+) as a cofactor.

The protein localises to the cytoplasm. It catalyses the reaction L-methionine + ATP + H2O = S-adenosyl-L-methionine + phosphate + diphosphate. It participates in amino-acid biosynthesis; S-adenosyl-L-methionine biosynthesis; S-adenosyl-L-methionine from L-methionine: step 1/1. In terms of biological role, catalyzes the formation of S-adenosylmethionine (AdoMet) from methionine and ATP. The overall synthetic reaction is composed of two sequential steps, AdoMet formation and the subsequent tripolyphosphate hydrolysis which occurs prior to release of AdoMet from the enzyme. The polypeptide is S-adenosylmethionine synthase (Deinococcus deserti (strain DSM 17065 / CIP 109153 / LMG 22923 / VCD115)).